We begin with the raw amino-acid sequence, 324 residues long: Protoheme IX farnesyltransferase (324 aa).

A run of 9 helical transmembrane segments spans residues 31-51, 56-76, 105-125, 126-146, 153-173, 181-201, 214-234, 238-258, and 285-305; these read LILLFLITTAAAMWVASSGQV, FLTTLLAGACAAGSANTINCI, VFAASLALTAFFLLAFGANLL, SACLAMAGIAVYIGVYTYWLK, IVIGGAAGAIPPLVGWAAVTG, VLFAIIFIWTPPHFWPLAMMI, PVVNGMATTANQTFIYTLLLL, LLLVYPLKVSGALYASIAIVL, and FSILYMMLLCAGMGVDSLPWT.

Belongs to the UbiA prenyltransferase family. Protoheme IX farnesyltransferase subfamily.

It localises to the cell inner membrane. The catalysed reaction is heme b + (2E,6E)-farnesyl diphosphate + H2O = Fe(II)-heme o + diphosphate. The protein operates within porphyrin-containing compound metabolism; heme O biosynthesis; heme O from protoheme: step 1/1. Converts heme B (protoheme IX) to heme O by substitution of the vinyl group on carbon 2 of heme B porphyrin ring with a hydroxyethyl farnesyl side group. The polypeptide is Protoheme IX farnesyltransferase (Acaryochloris marina (strain MBIC 11017)).